The following is a 167-amino-acid chain: Small ribosomal subunit protein uS5 (167 aa).

In terms of domain architecture, S5 DRBM spans L11–V74.

Belongs to the universal ribosomal protein uS5 family. As to quaternary structure, part of the 30S ribosomal subunit. Contacts proteins S4 and S8.

Functionally, with S4 and S12 plays an important role in translational accuracy. In terms of biological role, located at the back of the 30S subunit body where it stabilizes the conformation of the head with respect to the body. The protein is Small ribosomal subunit protein uS5 of Yersinia pseudotuberculosis serotype O:1b (strain IP 31758).